Here is a 355-residue protein sequence, read N- to C-terminus: 3'-5' exonuclease (355 aa).

Positions 1–119 (MDKFLIKMPI…TPSPEKVKPE (119 aa)) are disordered. Composition is skewed to basic and acidic residues over residues 13-29 (KNNE…KETP) and 71-91 (KNLD…ENPP). A phosphoserine mark is found at serine 104 and serine 112. Residues 154 to 315 (TDVDVVPMAF…GQVIYRDLEQ (162 aa)) enclose the 3'-5' exonuclease domain. Positions 164, 166, and 302 each coordinate Mg(2+).

It belongs to the WRNexo family.

The protein localises to the nucleus. Functionally, has exonuclease activity on both single-stranded and duplex templates bearing overhangs, but not blunt ended duplex DNA, and cleaves in a 3'-5' direction. Essential for the formation of DNA replication focal centers. Has an important role in maintaining genome stability. This chain is 3'-5' exonuclease, found in Drosophila persimilis (Fruit fly).